Here is a 285-residue protein sequence, read N- to C-terminus: NAD kinase (285 aa).

Aspartate 66 acts as the Proton acceptor in catalysis. Residues 66 to 67 (DG), 137 to 138 (ND), arginine 148, arginine 165, aspartate 167, and 178 to 183 (TAYSMS) each bind NAD(+).

The protein belongs to the NAD kinase family. A divalent metal cation serves as cofactor.

The protein localises to the cytoplasm. The catalysed reaction is NAD(+) + ATP = ADP + NADP(+) + H(+). Its function is as follows. Involved in the regulation of the intracellular balance of NAD and NADP, and is a key enzyme in the biosynthesis of NADP. Catalyzes specifically the phosphorylation on 2'-hydroxyl of the adenosine moiety of NAD to yield NADP. This chain is NAD kinase, found in Chlorobium phaeobacteroides (strain DSM 266 / SMG 266 / 2430).